Consider the following 319-residue polypeptide: ATP-dependent 6-phosphofructokinase (319 aa).

Gly11 contacts ATP. 21 to 25 (RAVVR) serves as a coordination point for ADP. ATP-binding positions include 72 to 73 (RC) and 102 to 105 (GDGS). Asp103 is a Mg(2+) binding site. Residue 125 to 127 (TID) participates in substrate binding. Asp127 (proton acceptor) is an active-site residue. Arg154 serves as a coordination point for ADP. 169–171 (MGR) contributes to the substrate binding site. Residues 185–187 (GAE), Arg211, and 213–215 (KKH) contribute to the ADP site. Substrate-binding positions include Glu222, Arg243, and 249–252 (HIQR).

This sequence belongs to the phosphofructokinase type A (PFKA) family. ATP-dependent PFK group I subfamily. Prokaryotic clade 'B1' sub-subfamily. In terms of assembly, homotetramer. Requires Mg(2+) as cofactor.

The protein localises to the cytoplasm. It carries out the reaction beta-D-fructose 6-phosphate + ATP = beta-D-fructose 1,6-bisphosphate + ADP + H(+). Its pathway is carbohydrate degradation; glycolysis; D-glyceraldehyde 3-phosphate and glycerone phosphate from D-glucose: step 3/4. Its activity is regulated as follows. Allosterically activated by ADP and other diphosphonucleosides, and allosterically inhibited by phosphoenolpyruvate. Its function is as follows. Catalyzes the phosphorylation of D-fructose 6-phosphate to fructose 1,6-bisphosphate by ATP, the first committing step of glycolysis. The sequence is that of ATP-dependent 6-phosphofructokinase from Lysinibacillus sphaericus (Bacillus sphaericus).